The primary structure comprises 376 residues: Chaperone protein DnaJ (376 aa).

Positions 5-70 (DYYEVLGVAR…QKRAAYDQFG (66 aa)) constitute a J domain. Residues 134–212 (GTSVKIKVPT…CHGHGRVEET (79 aa)) form a CR-type zinc finger. Zn(2+) contacts are provided by Cys147, Cys150, Cys164, Cys167, Cys186, Cys189, Cys200, and Cys203. 4 CXXCXGXG motif repeats span residues 147–154 (CTNCGGSG), 164–171 (CNTCGGHG), 186–193 (CPTCRGQG), and 200–207 (CNKCHGHG).

Belongs to the DnaJ family. In terms of assembly, homodimer. Zn(2+) serves as cofactor.

The protein resides in the cytoplasm. Participates actively in the response to hyperosmotic and heat shock by preventing the aggregation of stress-denatured proteins and by disaggregating proteins, also in an autonomous, DnaK-independent fashion. Unfolded proteins bind initially to DnaJ; upon interaction with the DnaJ-bound protein, DnaK hydrolyzes its bound ATP, resulting in the formation of a stable complex. GrpE releases ADP from DnaK; ATP binding to DnaK triggers the release of the substrate protein, thus completing the reaction cycle. Several rounds of ATP-dependent interactions between DnaJ, DnaK and GrpE are required for fully efficient folding. Also involved, together with DnaK and GrpE, in the DNA replication of plasmids through activation of initiation proteins. This is Chaperone protein DnaJ from Teredinibacter turnerae (strain ATCC 39867 / T7901).